Here is a 364-residue protein sequence, read N- to C-terminus: Chorismate synthase (364 aa).

R47 is a binding site for NADP(+). FMN contacts are provided by residues 125 to 127, G285, 300 to 304, and R327; these read RFS and KPTPS.

It belongs to the chorismate synthase family. In terms of assembly, homotetramer. Requires FMNH2 as cofactor.

The enzyme catalyses 5-O-(1-carboxyvinyl)-3-phosphoshikimate = chorismate + phosphate. It functions in the pathway metabolic intermediate biosynthesis; chorismate biosynthesis; chorismate from D-erythrose 4-phosphate and phosphoenolpyruvate: step 7/7. Catalyzes the anti-1,4-elimination of the C-3 phosphate and the C-6 proR hydrogen from 5-enolpyruvylshikimate-3-phosphate (EPSP) to yield chorismate, which is the branch point compound that serves as the starting substrate for the three terminal pathways of aromatic amino acid biosynthesis. This reaction introduces a second double bond into the aromatic ring system. This is Chorismate synthase from Dehalococcoides mccartyi (strain ATCC BAA-2266 / KCTC 15142 / 195) (Dehalococcoides ethenogenes (strain 195)).